The chain runs to 410 residues: Cysteine desulfurase IscS (410 aa).

Pyridoxal 5'-phosphate contacts are provided by residues 80 to 81, Asn-160, Gln-188, and 208 to 210; these read AT and SGH. The residue at position 211 (Lys-211) is an N6-(pyridoxal phosphate)lysine. Thr-248 serves as a coordination point for pyridoxal 5'-phosphate. The active-site Cysteine persulfide intermediate is the Cys-334. Position 334 (Cys-334) interacts with [2Fe-2S] cluster.

The protein belongs to the class-V pyridoxal-phosphate-dependent aminotransferase family. NifS/IscS subfamily. As to quaternary structure, homodimer. Forms a heterotetramer with IscU, interacts with other sulfur acceptors. Requires pyridoxal 5'-phosphate as cofactor.

It localises to the cytoplasm. It carries out the reaction (sulfur carrier)-H + L-cysteine = (sulfur carrier)-SH + L-alanine. It participates in cofactor biosynthesis; iron-sulfur cluster biosynthesis. Master enzyme that delivers sulfur to a number of partners involved in Fe-S cluster assembly, tRNA modification or cofactor biosynthesis. Catalyzes the removal of elemental sulfur atoms from cysteine to produce alanine. Functions as a sulfur delivery protein for Fe-S cluster synthesis onto IscU, an Fe-S scaffold assembly protein, as well as other S acceptor proteins. This is Cysteine desulfurase IscS from Rickettsia rickettsii (strain Iowa).